A 484-amino-acid chain; its full sequence is Glutamate--tRNA ligase (484 aa).

Positions 11–21 match the 'HIGH' region motif; sequence PSPTGYLHIGN. The short motif at 252-256 is the 'KMSKS' region element; it reads KLSKR. ATP is bound at residue K255.

Belongs to the class-I aminoacyl-tRNA synthetase family. Glutamate--tRNA ligase type 1 subfamily. Monomer.

The protein resides in the cytoplasm. It carries out the reaction tRNA(Glu) + L-glutamate + ATP = L-glutamyl-tRNA(Glu) + AMP + diphosphate. Functionally, catalyzes the attachment of glutamate to tRNA(Glu) in a two-step reaction: glutamate is first activated by ATP to form Glu-AMP and then transferred to the acceptor end of tRNA(Glu). This is Glutamate--tRNA ligase from Staphylococcus aureus (strain COL).